The sequence spans 199 residues: Small heat shock protein hspG4 (199 aa).

The sHSP domain occupies 30–199; sequence NKRVDIIPSM…SSNTIKININ (170 aa). The segment at 83-105 is disordered; it reads KNQQQQQQQQQLENSNNKENDEP.

The protein belongs to the small heat shock protein (HSP20) family.

This is Small heat shock protein hspG4 (hspG4) from Dictyostelium discoideum (Social amoeba).